The chain runs to 301 residues: Homoserine O-acetyltransferase (301 aa).

C142 serves as the catalytic Acyl-thioester intermediate. Substrate is bound by residues K163 and S192. The active-site Proton acceptor is H235. Residue E237 is part of the active site. Substrate is bound at residue R249.

Belongs to the MetA family.

It is found in the cytoplasm. The catalysed reaction is L-homoserine + acetyl-CoA = O-acetyl-L-homoserine + CoA. It functions in the pathway amino-acid biosynthesis; L-methionine biosynthesis via de novo pathway; O-acetyl-L-homoserine from L-homoserine: step 1/1. Functionally, transfers an acetyl group from acetyl-CoA to L-homoserine, forming acetyl-L-homoserine. This Bacillus cereus (strain ZK / E33L) protein is Homoserine O-acetyltransferase.